Here is a 452-residue protein sequence, read N- to C-terminus: tRNA modification GTPase MnmE (452 aa).

Arginine 22, glutamate 79, and lysine 119 together coordinate (6S)-5-formyl-5,6,7,8-tetrahydrofolate. The TrmE-type G domain maps to glycine 215 to glycine 375. Asparagine 225 serves as a coordination point for K(+). Residues asparagine 225–serine 230, threonine 244–threonine 250, aspartate 269–glycine 272, and asparagine 333–aspartate 336 contribute to the GTP site. Residue serine 229 participates in Mg(2+) binding. 3 residues coordinate K(+): threonine 244, isoleucine 246, and threonine 249. A Mg(2+)-binding site is contributed by threonine 250. Lysine 452 contributes to the (6S)-5-formyl-5,6,7,8-tetrahydrofolate binding site.

It belongs to the TRAFAC class TrmE-Era-EngA-EngB-Septin-like GTPase superfamily. TrmE GTPase family. Homodimer. Heterotetramer of two MnmE and two MnmG subunits. Requires K(+) as cofactor.

It is found in the cytoplasm. Its function is as follows. Exhibits a very high intrinsic GTPase hydrolysis rate. Involved in the addition of a carboxymethylaminomethyl (cmnm) group at the wobble position (U34) of certain tRNAs, forming tRNA-cmnm(5)s(2)U34. The sequence is that of tRNA modification GTPase MnmE from Histophilus somni (strain 2336) (Haemophilus somnus).